Consider the following 153-residue polypeptide: Aspartate carbamoyltransferase regulatory chain (153 aa).

The Zn(2+) site is built by cysteine 109, cysteine 114, cysteine 138, and cysteine 141.

It belongs to the PyrI family. As to quaternary structure, contains catalytic and regulatory chains. It depends on Zn(2+) as a cofactor.

Functionally, involved in allosteric regulation of aspartate carbamoyltransferase. The polypeptide is Aspartate carbamoyltransferase regulatory chain (Vibrio campbellii (strain ATCC BAA-1116)).